Here is a 747-residue protein sequence, read N- to C-terminus: Polyribonucleotide nucleotidyltransferase (747 aa).

Mg(2+) contacts are provided by D487 and D493. The 60-residue stretch at P554–I613 folds into the KH domain. The S1 motif domain occupies G623 to K691. The disordered stretch occupies residues K691 to N747. Residues S699–K712 show a composition bias toward low complexity. The segment covering E730–V739 has biased composition (polar residues).

Belongs to the polyribonucleotide nucleotidyltransferase family. Mg(2+) serves as cofactor.

It is found in the cytoplasm. The enzyme catalyses RNA(n+1) + phosphate = RNA(n) + a ribonucleoside 5'-diphosphate. Its function is as follows. Involved in mRNA degradation. Catalyzes the phosphorolysis of single-stranded polyribonucleotides processively in the 3'- to 5'-direction. This chain is Polyribonucleotide nucleotidyltransferase, found in Rickettsia akari (strain Hartford).